The following is a 380-amino-acid chain: Nucleoporin Nup43 (380 aa).

Position 1 is an N-acetylmethionine (methionine 1). WD repeat units follow at residues 8-57 (FVSQ…NLDS), 72-110 (RHHG…QTLS), 127-166 (PSYS…AVRT), 170-208 (ADSS…NEPS), 215-255 (GDRV…MPVS), and 259-299 (AHEA…PEKS).

In terms of assembly, component of the Nup107-160 subcomplex of the nuclear pore complex (NPC). The Nup107-160 subcomplex includes NUP160, NUP133, NUP107, NUP98, NUP85, NUP43, NUP37, SEH1 and SEC13.

It localises to the chromosome. The protein resides in the centromere. The protein localises to the kinetochore. Its subcellular location is the nucleus. It is found in the nuclear pore complex. Its function is as follows. Component of the Nup107-160 subcomplex of the nuclear pore complex (NPC). The Nup107-160 subcomplex is required for the assembly of a functional NPC. The Nup107-160 subcomplex is also required for normal kinetochore microtubule attachment, mitotic progression and chromosome segregation. This Homo sapiens (Human) protein is Nucleoporin Nup43 (NUP43).